A 233-amino-acid polypeptide reads, in one-letter code: Purine nucleoside phosphorylase DeoD-type (233 aa).

An a purine D-ribonucleoside-binding site is contributed by histidine 4. Phosphate contacts are provided by residues glycine 20, arginine 24, arginine 43, and 87–90; that span reads RVGT. A purine D-ribonucleoside-binding positions include 178–180 and 202–203; these read EME and SD. Aspartate 203 (proton donor) is an active-site residue.

Belongs to the PNP/UDP phosphorylase family. In terms of assembly, homohexamer; trimer of homodimers.

The enzyme catalyses a purine D-ribonucleoside + phosphate = a purine nucleobase + alpha-D-ribose 1-phosphate. It catalyses the reaction a purine 2'-deoxy-D-ribonucleoside + phosphate = a purine nucleobase + 2-deoxy-alpha-D-ribose 1-phosphate. Functionally, catalyzes the reversible phosphorolytic breakdown of the N-glycosidic bond in the beta-(deoxy)ribonucleoside molecules, with the formation of the corresponding free purine bases and pentose-1-phosphate. The sequence is that of Purine nucleoside phosphorylase DeoD-type from Listeria innocua serovar 6a (strain ATCC BAA-680 / CLIP 11262).